A 56-amino-acid chain; its full sequence is Ovomucoid (56 aa).

In terms of domain architecture, Kazal-like spans 6–56; the sequence is VDCSDHPKPACLQEQKPLCGSDNKTYDNKCSFCNAVVDSNGTLTLSHFGKC. 3 cysteine pairs are disulfide-bonded: Cys8–Cys38, Cys16–Cys35, and Cys24–Cys56. N-linked (GlcNAc...) asparagine glycosylation occurs at Asn45.

It localises to the secreted. This chain is Ovomucoid, found in Penelope jacquacu (Spix's guan).